The following is a 545-amino-acid chain: Methionine--tRNA ligase (545 aa).

The short motif at 13–23 (PYANGEIHLGH) is the 'HIGH' region element. The Zn(2+) site is built by Cys-144, Cys-147, Cys-157, and Cys-160. The 'KMSKS' region motif lies at 329 to 333 (KMSKS). Lys-332 provides a ligand contact to ATP.

It belongs to the class-I aminoacyl-tRNA synthetase family. MetG type 1 subfamily. As to quaternary structure, monomer. It depends on Zn(2+) as a cofactor.

It localises to the cytoplasm. It catalyses the reaction tRNA(Met) + L-methionine + ATP = L-methionyl-tRNA(Met) + AMP + diphosphate. In terms of biological role, is required not only for elongation of protein synthesis but also for the initiation of all mRNA translation through initiator tRNA(fMet) aminoacylation. The polypeptide is Methionine--tRNA ligase (Vesicomyosocius okutanii subsp. Calyptogena okutanii (strain HA)).